The following is a 407-amino-acid chain: Phosphonoacetate hydrolase (407 aa).

The Zn(2+) site is built by Asp-25, Thr-64, Asp-202, His-206, Asp-241, His-242, and His-368. Thr-64 and Asp-202 together coordinate substrate. Substrate-binding residues include His-242 and His-368.

Belongs to the alkaline phosphatase family. PhnA subfamily. In terms of assembly, homodimer. Zn(2+) is required as a cofactor.

The enzyme catalyses phosphonoacetate + H2O = acetate + phosphate + H(+). Specifically hydrolyzes phosphonoacetate. Does not have activity on other organophosphonates or acetates. This is Phosphonoacetate hydrolase from Pseudomonas cedrina.